Here is a 557-residue protein sequence, read N- to C-terminus: 6-methylpretetramide 4-monooxygenase (557 aa).

Residues 9–38 (QVLI…VIDR) and 278–288 (MRSGRCFVAGD) each bind FAD. Positions 530–557 (LPEDTAPGAGDSAGRPAPDGTRRGVTTE) are disordered.

It belongs to the PheA/TfdB FAD monooxygenase family. FAD is required as a cofactor.

It catalyses the reaction 6-methylpretetramide + NADPH + O2 + 2 H(+) = 4-hydroxy-6-methylpretetramide + NADP(+) + H2O. It carries out the reaction 4-hydroxy-6-methylpretetramide + NADPH + O2 = 4-dedimethylamino-4-oxo-anhydrotetracycline + NADP(+) + H2O. It participates in antibiotic biosynthesis; oxytetracycline biosynthesis. Its function is as follows. Involved in the biosynthesis of the tetracycline antibiotic, oxytetracycline. Catalyzes the double hydroxylation of 6-methylpretetramide to yield 4-keto-anhydrotetracycline, via the insertion of oxygen atoms at the C-12a and C-4 positions of 6-pretetramid. The chain is 6-methylpretetramide 4-monooxygenase from Streptomyces rimosus.